Consider the following 445-residue polypeptide: 6-phosphogluconate dehydrogenase, decarboxylating (445 aa).

NADP(+)-binding positions include 1 to 4 (AVMG), 22 to 24 (NRS), 63 to 65 (VKA), and Asn-91. Residues Asn-91 and 117 to 119 (SGG) contribute to the substrate site. Lys-172 (proton acceptor) is an active-site residue. 175–176 (HN) lines the substrate pocket. Residue Glu-179 is the Proton donor of the active site. The substrate site is built by Tyr-180, Lys-249, Arg-276, Arg-434, and His-440.

The protein belongs to the 6-phosphogluconate dehydrogenase family. Homodimer.

It carries out the reaction 6-phospho-D-gluconate + NADP(+) = D-ribulose 5-phosphate + CO2 + NADPH. Its pathway is carbohydrate degradation; pentose phosphate pathway; D-ribulose 5-phosphate from D-glucose 6-phosphate (oxidative stage): step 3/3. Functionally, catalyzes the oxidative decarboxylation of 6-phosphogluconate to ribulose 5-phosphate and CO(2), with concomitant reduction of NADP to NADPH. The polypeptide is 6-phosphogluconate dehydrogenase, decarboxylating (gnd) (Shigella dysenteriae).